The chain runs to 546 residues: Glucose-6-phosphate isomerase 1 (546 aa).

Glu-353 acts as the Proton donor in catalysis. Active-site residues include His-384 and Lys-512.

The protein belongs to the GPI family.

The protein localises to the cytoplasm. It catalyses the reaction alpha-D-glucose 6-phosphate = beta-D-fructose 6-phosphate. Its pathway is carbohydrate biosynthesis; gluconeogenesis. It participates in carbohydrate degradation; glycolysis; D-glyceraldehyde 3-phosphate and glycerone phosphate from D-glucose: step 2/4. Functionally, catalyzes the reversible isomerization of glucose-6-phosphate to fructose-6-phosphate. This chain is Glucose-6-phosphate isomerase 1, found in Colwellia psychrerythraea (strain 34H / ATCC BAA-681) (Vibrio psychroerythus).